The chain runs to 200 residues: Snake venom serine protease VaSP1 (200 aa).

The 200-residue stretch at V1–K200 folds into the Peptidase S1 domain. Active-site charge relay system residues include D88 and S182.

In terms of assembly, monomer. N-glycosylated. The protein exist in multiple isoforms. Expressed by the venom gland.

The protein resides in the secreted. Inhibited by Pefabloc (90% inhibition), DTT (90%), Zn(2+) (80%), trypsin inhibitor II (50%), and benzamidine (45%), but not inhibited by EDTA, Ca(2+), Mg(2+) and L-Cys. Its function is as follows. Snake venom serine protease active on several blood coagulation enzymes. It completely cleaves fibrinogen Aalpha chain (FGA) after 120 minutes, partially cleaves Bbeta chain (FGB) (overnight) and has no activity on gamma chain. It does not release fibrinopeptides A and/or B exclusively, since the enzyme does not provoke fibrin polymerisation. It also degrades fibrin as efficiently as plasmin, and exhibits potent ability to cleave plasminogen and prothrombin, as well as heavy chain of factor X (F10). In vitro, it cleaves insulin B-chain (at positions His38-Leu39, Ala40-Leu41 and Tyr16-Leu17). The chain is Snake venom serine protease VaSP1 from Vipera ammodytes ammodytes (Western sand viper).